Consider the following 209-residue polypeptide: Uracil phosphoribosyltransferase (209 aa).

Residues Arg79, Arg104, and 131 to 139 (DPMLATGGS) each bind 5-phospho-alpha-D-ribose 1-diphosphate. Uracil is bound by residues Ile194 and 199 to 201 (GDA). Residue Asp200 coordinates 5-phospho-alpha-D-ribose 1-diphosphate.

Belongs to the UPRTase family. Mg(2+) is required as a cofactor.

It carries out the reaction UMP + diphosphate = 5-phospho-alpha-D-ribose 1-diphosphate + uracil. Its pathway is pyrimidine metabolism; UMP biosynthesis via salvage pathway; UMP from uracil: step 1/1. Allosterically activated by GTP. Functionally, catalyzes the conversion of uracil and 5-phospho-alpha-D-ribose 1-diphosphate (PRPP) to UMP and diphosphate. This Macrococcus caseolyticus (strain JCSC5402) (Macrococcoides caseolyticum) protein is Uracil phosphoribosyltransferase.